The following is a 216-amino-acid chain: MAKAKEVKAKPIKGEEAEKLVYEYLRKTNRPYSATDVSANLKNVVSKQVAQKALEQLRDTGLIHGKLYGKQSVFVCLQDDLAAATPEELAEMEKQIQELKDEVSVVKTLYKEKCIELQALNNSLSPAEIREKIQSIDKEIEETSSKLESLRNGTVKQISKEAMQKTDKNYDFAKKGFSNRKKMFYDLWHLITDSLENPKQLWEKLGFETEGPIDLN.

The protein belongs to the HOP2 family. As to quaternary structure, interacts with mcp7.

It is found in the nucleus. In terms of biological role, required for proper homologous pairing and efficient cross-over and intragenic recombination during meiosis. Acts indirectly in a process facilitating homologous recombination. Acts during mid- to late-horse-tail period. The protein is Homologous-pairing protein 2 (meu13) of Schizosaccharomyces pombe (strain 972 / ATCC 24843) (Fission yeast).